A 200-amino-acid chain; its full sequence is Small ribosomal subunit protein uS4 (200 aa).

Positions Thr22–Lys42 are disordered. The 61-residue stretch at Ala92–Lys152 folds into the S4 RNA-binding domain.

The protein belongs to the universal ribosomal protein uS4 family. Part of the 30S ribosomal subunit. Contacts protein S5. The interaction surface between S4 and S5 is involved in control of translational fidelity.

One of the primary rRNA binding proteins, it binds directly to 16S rRNA where it nucleates assembly of the body of the 30S subunit. Functionally, with S5 and S12 plays an important role in translational accuracy. The chain is Small ribosomal subunit protein uS4 from Bacillus mycoides (strain KBAB4) (Bacillus weihenstephanensis).